Consider the following 350-residue polypeptide: S-adenosylmethionine:tRNA ribosyltransferase-isomerase (350 aa).

The protein belongs to the QueA family. In terms of assembly, monomer.

It is found in the cytoplasm. It carries out the reaction 7-aminomethyl-7-carbaguanosine(34) in tRNA + S-adenosyl-L-methionine = epoxyqueuosine(34) in tRNA + adenine + L-methionine + 2 H(+). It participates in tRNA modification; tRNA-queuosine biosynthesis. Functionally, transfers and isomerizes the ribose moiety from AdoMet to the 7-aminomethyl group of 7-deazaguanine (preQ1-tRNA) to give epoxyqueuosine (oQ-tRNA). The sequence is that of S-adenosylmethionine:tRNA ribosyltransferase-isomerase from Bacillus cereus (strain Q1).